Here is a 176-residue protein sequence, read N- to C-terminus: Ferritin, middle subunit (176 aa).

The 150-residue stretch at 7-156 folds into the Ferritin-like diiron domain; it reads QNYHHDCERA…DHITNLTKMD (150 aa). The Fe cation site is built by E24, E59, H62, E104, and Q138.

Belongs to the ferritin family. In terms of assembly, oligomer of 24 subunits. There are at least two types of subunits. The functional molecule forms a roughly spherical shell with a diameter of 12 nm and contains a central cavity into which the insoluble mineral iron core is deposited. Almost exclusively in the gonads.

The catalysed reaction is 4 Fe(2+) + O2 + 4 H(+) = 4 Fe(3+) + 2 H2O. Stores iron in a soluble, non-toxic, readily available form. Important for iron homeostasis. Has ferroxidase activity. Iron is taken up in the ferrous form and deposited as ferric hydroxides after oxidation. This Salmo salar (Atlantic salmon) protein is Ferritin, middle subunit.